We begin with the raw amino-acid sequence, 858 residues long: Myosin-K heavy chain (858 aa).

Positions 7-820 (SGVDDLVLVS…TIFVMEDLLM (814 aa)) constitute a Myosin motor domain. 100-107 (GESGAGKT) contributes to the ATP binding site. The disordered stretch occupies residues 121 to 265 (SPNNSSGGGI…GGGYGGSSKT (145 aa)). 2 stretches are compositionally biased toward gly residues: residues 126-139 (SGGG…GNGG) and 157-182 (RGMG…SRGG). The segment covering 183–228 (GPPPTRGRGGPPPPIPQNRGAPPPVSNGGAPPPVARGPVAPPPTRG) has biased composition (pro residues). A compositionally biased stretch (gly residues) spans 233 to 245 (RGGGPANRGGRGG). The tract at residues 712–722 (PHYIRCIKPND) is actin-binding. The tract at residues 821 to 858 (QKIDPIGYKNRVQAYKENEKLAQMKQGKHSMKQKCLIQ) is tail.

This sequence belongs to the TRAFAC class myosin-kinesin ATPase superfamily. Myosin family.

The protein localises to the cytoplasm. Myosins are actin-based motor molecules with ATPase activity. Involved in phagocytosis and motility, and in the maintenance and dynamics of cell cortex. The protein is Myosin-K heavy chain (myoK) of Dictyostelium discoideum (Social amoeba).